We begin with the raw amino-acid sequence, 93 residues long: UPF0369 protein RC0209 (93 aa).

Positions 1–24 are disordered; that stretch reads MDDKKDNRHLSKPAYREECTGDTE. In terms of domain architecture, RPE1 insert spans 8–55; that stretch reads RHLSKPAYREECTGDTERSTTAYMDILEDVSTGSTSKLPLEAKFVKIS.

The protein belongs to the SDHAF4 family.

The sequence is that of UPF0369 protein RC0209 from Rickettsia conorii (strain ATCC VR-613 / Malish 7).